We begin with the raw amino-acid sequence, 151 residues long: 3-hydroxyacyl-[acyl-carrier-protein] dehydratase FabZ (151 aa).

His54 is an active-site residue.

This sequence belongs to the thioester dehydratase family. FabZ subfamily. As to quaternary structure, oligomer. The N-terminus is blocked.

It localises to the cytoplasm. The catalysed reaction is a (3R)-hydroxyacyl-[ACP] = a (2E)-enoyl-[ACP] + H2O. Involved in unsaturated fatty acids biosynthesis. Catalyzes the dehydration of short chain beta-hydroxyacyl-ACPs and long chain saturated and unsaturated beta-hydroxyacyl-ACPs. This is 3-hydroxyacyl-[acyl-carrier-protein] dehydratase FabZ from Escherichia coli O9:H4 (strain HS).